The chain runs to 253 residues: Phosphate import ATP-binding protein PstB (253 aa).

In terms of domain architecture, ABC transporter spans 7-248 (IDARDVNFWY…PEKEATQNYI (242 aa)). ATP is bound at residue 39–46 (GPSGCGKS).

The protein belongs to the ABC transporter superfamily. Phosphate importer (TC 3.A.1.7) family. In terms of assembly, the complex is composed of two ATP-binding proteins (PstB), two transmembrane proteins (PstC and PstA) and a solute-binding protein (PstS).

It localises to the cell inner membrane. It catalyses the reaction phosphate(out) + ATP + H2O = ADP + 2 phosphate(in) + H(+). Functionally, part of the ABC transporter complex PstSACB involved in phosphate import. Responsible for energy coupling to the transport system. This Bacteroides fragilis (strain ATCC 25285 / DSM 2151 / CCUG 4856 / JCM 11019 / LMG 10263 / NCTC 9343 / Onslow / VPI 2553 / EN-2) protein is Phosphate import ATP-binding protein PstB.